Reading from the N-terminus, the 299-residue chain is Probable lipid kinase YegS (299 aa).

One can recognise a DAGKc domain in the interval 2 to 133 (AEFPASLLIL…IDMAQVNKQT (132 aa)). ATP is bound by residues Thr-40, 66–72 (GDGTINE), and Thr-95. Mg(2+)-binding residues include Leu-215, Asp-218, and Leu-220. Glu-271 serves as the catalytic Proton acceptor.

The protein belongs to the diacylglycerol/lipid kinase family. YegS lipid kinase subfamily. The cofactor is Mg(2+). Requires Ca(2+) as cofactor.

The protein resides in the cytoplasm. Functionally, probably phosphorylates lipids; the in vivo substrate is unknown. This is Probable lipid kinase YegS from Shigella boydii serotype 18 (strain CDC 3083-94 / BS512).